The sequence spans 359 residues: Ornithine carbamoyltransferase, mitochondrial (359 aa).

A mitochondrion-targeting transit peptide spans 1-24 (MASLRSVLKSQSLRHTVRSYSSQT). Carbamoyl phosphate is bound by residues 87–90 (STRT), Arg-138, His-165, and Gln-168. The L-ornithine site is built by Asn-205, Asp-271, Ser-275, and Met-276. The Proton acceptor role is filled by Cys-313. Residues 313-314 (CL) and Arg-340 contribute to the carbamoyl phosphate site.

The protein belongs to the aspartate/ornithine carbamoyltransferase superfamily. OTCase family. In terms of assembly, homotrimer.

The protein localises to the mitochondrion matrix. It carries out the reaction carbamoyl phosphate + L-ornithine = L-citrulline + phosphate + H(+). The protein operates within amino-acid biosynthesis; L-arginine biosynthesis; L-arginine from L-ornithine and carbamoyl phosphate: step 1/3. This Emericella nidulans (strain FGSC A4 / ATCC 38163 / CBS 112.46 / NRRL 194 / M139) (Aspergillus nidulans) protein is Ornithine carbamoyltransferase, mitochondrial (argB).